We begin with the raw amino-acid sequence, 193 residues long: Putative RING finger protein ORF38 (193 aa).

The RING-type zinc-finger motif lies at Cys12 to Arg50.

The chain is Putative RING finger protein ORF38 from Magallana gigas (Pacific oyster).